The primary structure comprises 348 residues: Rhodopsin (348 aa).

An N-acetylmethionine modification is found at M1. At 1-36 (MNGTEGLNFYVPFSNKTGVVRSPFEYPQYYLAEPWQ) the chain is on the extracellular side. 2 N-linked (GlcNAc...) asparagine glycosylation sites follow: N2 and N15. Residues 37-61 (FSVLAAYMFLLIVLGFPINFLTLYV) form a helical membrane-spanning segment. The Cytoplasmic portion of the chain corresponds to 62–73 (TVQHKKLRTPLN). Residues 74–99 (YILLNLAVANLFMVFGGFTTTLYTSL) form a helical membrane-spanning segment. Residues 100–111 (HAYFVFGPTGCN) lie on the Extracellular side of the membrane. Residues C110 and C187 are joined by a disulfide bond. The chain crosses the membrane as a helical span at residues 112 to 133 (LEGFFATLGGEIALWSLVVLAI). The 'Ionic lock' involved in activated form stabilization signature appears at 134-136 (ERY). At 134–152 (ERYVVVCKPMSNFRFGENH) the chain is on the cytoplasmic side. Residues 153–173 (AIMGLALTWIMAMACAAAPLV) form a helical membrane-spanning segment. Over 174–202 (GWSRYIPEGMQCSCGIDYYTSRQEVNNES) the chain is Extracellular. E201 lines the Zn(2+) pocket. Residues 203–227 (FVIYMFVVHFTIPLVIIFFCYGQLV) form a helical membrane-spanning segment. The Cytoplasmic segment spans residues 228 to 252 (FTVKEAAAQQQESATTQKAEKEVTR). A helical transmembrane segment spans residues 253 to 274 (MVIIMVVAFLICWVPYASVAFY). Over 275–286 (IFTHQGSDFGPI) the chain is Extracellular. Q279 contributes to the Zn(2+) binding site. The chain crosses the membrane as a helical span at residues 287–306 (FMTIPSFFAKSSSIYNPVIY). Position 296 is an N6-(retinylidene)lysine (K296). Residues 307–348 (IMMNKQFRNCMLTTLCCGRNPLGDDEASTTASKTETSQVAPA) are Cytoplasmic-facing. Residues C322 and C323 are each lipidated (S-palmitoyl cysteine). S334 carries the post-translational modification Phosphoserine. A phosphothreonine mark is found at T335 and T336. Residue S338 is modified to Phosphoserine. Phosphothreonine is present on residues T340 and T342. The residue at position 343 (S343) is a Phosphoserine.

It belongs to the G-protein coupled receptor 1 family. Opsin subfamily. As to quaternary structure, homodimer. May form a complex composed of RHO, GRK1 and RCVRN in a Ca(2+)-dependent manner; RCVRN prevents the interaction between GRK1 and RHO. Interacts with GRK1. Interacts (phosphorylated form) with SAG. Interacts with GNAT1. Interacts with GNAT3. SAG and G-proteins compete for a common binding site. Interacts with PRCD; the interaction promotes PRCD stability. Forms a complex with ASAP1 and ARF4. Forms a complex with ASAP1, RAB11A, Rabin8/RAB3IP, ARF4 and RAB11FIP3; the complex regulates Golgi-to-cilia rhodopsin/RHO transport in photoreceptors. Post-translationally, contains one covalently linked retinal chromophore. Upon light absorption, the covalently bound 11-cis-retinal is converted to all-trans-retinal. After hydrolysis of the Schiff base and release of the covalently bound all-trans-retinal, active rhodopsin is regenerated by binding of a fresh molecule of 11-cis-retinal.

It is found in the membrane. Its subcellular location is the cell projection. The protein localises to the cilium. The protein resides in the photoreceptor outer segment. Functionally, photoreceptor required for image-forming vision at low light intensity. Light-induced isomerization of 11-cis to all-trans retinal triggers a conformational change that activates signaling via G-proteins. Signaling mediates the activation of phospholipase C. Subsequent receptor phosphorylation mediates displacement of the bound G-protein alpha subunit by arrestin and terminates signaling. This is Rhodopsin (RHO) from Tursiops truncatus (Atlantic bottle-nosed dolphin).